The chain runs to 278 residues: NADPH-dependent 7-cyano-7-deazaguanine reductase (278 aa).

87 to 89 (IES) is a binding site for substrate. 89-90 (SK) serves as a coordination point for NADPH. The active-site Thioimide intermediate is the Cys185. Asp192 serves as the catalytic Proton donor. A substrate-binding site is contributed by 224–225 (HE). Residue 253 to 254 (RG) participates in NADPH binding. Residues 255 to 278 (GLDINPYRSTNPTFSVQNHRSFRQ) are disordered. Residues 261-278 (YRSTNPTFSVQNHRSFRQ) are compositionally biased toward polar residues.

The protein belongs to the GTP cyclohydrolase I family. QueF type 2 subfamily. Homodimer.

The protein localises to the cytoplasm. The catalysed reaction is 7-aminomethyl-7-carbaguanine + 2 NADP(+) = 7-cyano-7-deazaguanine + 2 NADPH + 3 H(+). It functions in the pathway tRNA modification; tRNA-queuosine biosynthesis. Functionally, catalyzes the NADPH-dependent reduction of 7-cyano-7-deazaguanine (preQ0) to 7-aminomethyl-7-deazaguanine (preQ1). The sequence is that of NADPH-dependent 7-cyano-7-deazaguanine reductase from Coxiella burnetii (strain CbuG_Q212) (Coxiella burnetii (strain Q212)).